A 520-amino-acid polypeptide reads, in one-letter code: Probable methylmalonate-semialdehyde/malonate-semialdehyde dehydrogenase [acylating], mitochondrial (520 aa).

Positions 169, 171, 195, 198, 199, and 248 each coordinate NAD(+). Cys303 (nucleophile) is an active-site residue. Residue Glu403 participates in NAD(+) binding.

The protein belongs to the aldehyde dehydrogenase family. In terms of assembly, homotetramer.

It localises to the mitochondrion. The enzyme catalyses 2-methyl-3-oxopropanoate + NAD(+) + CoA + H2O = propanoyl-CoA + hydrogencarbonate + NADH + H(+). It catalyses the reaction 3-oxopropanoate + NAD(+) + CoA + H2O = hydrogencarbonate + acetyl-CoA + NADH + H(+). Functionally, probable malonate and methylmalonate semialdehyde dehydrogenase involved in the catabolism of valine, thymine, and compounds catabolized by way of beta-alanine, including uracil and cytidine. This is Probable methylmalonate-semialdehyde/malonate-semialdehyde dehydrogenase [acylating], mitochondrial from Drosophila pseudoobscura pseudoobscura (Fruit fly).